We begin with the raw amino-acid sequence, 552 residues long: Formate--tetrahydrofolate ligase (552 aa).

62-69 (TPAGEGKS) serves as a coordination point for ATP.

It belongs to the formate--tetrahydrofolate ligase family.

The enzyme catalyses (6S)-5,6,7,8-tetrahydrofolate + formate + ATP = (6R)-10-formyltetrahydrofolate + ADP + phosphate. Its pathway is one-carbon metabolism; tetrahydrofolate interconversion. The polypeptide is Formate--tetrahydrofolate ligase (Ligilactobacillus salivarius (strain UCC118) (Lactobacillus salivarius)).